Here is a 335-residue protein sequence, read N- to C-terminus: Beta-ketoacyl-[acyl-carrier-protein] synthase III (335 aa).

Residues Cys-117 and His-258 contribute to the active site. The interval 259–263 (QANQR) is ACP-binding. Residue Asn-288 is part of the active site.

The protein belongs to the thiolase-like superfamily. FabH family. As to quaternary structure, homodimer.

The protein localises to the cytoplasm. The enzyme catalyses malonyl-[ACP] + acetyl-CoA + H(+) = 3-oxobutanoyl-[ACP] + CO2 + CoA. It functions in the pathway lipid metabolism; fatty acid biosynthesis. Catalyzes the condensation reaction of fatty acid synthesis by the addition to an acyl acceptor of two carbons from malonyl-ACP. Catalyzes the first condensation reaction which initiates fatty acid synthesis and may therefore play a role in governing the total rate of fatty acid production. Possesses both acetoacetyl-ACP synthase and acetyl transacylase activities. Its substrate specificity determines the biosynthesis of branched-chain and/or straight-chain of fatty acids. The chain is Beta-ketoacyl-[acyl-carrier-protein] synthase III from Synechococcus elongatus (strain ATCC 33912 / PCC 7942 / FACHB-805) (Anacystis nidulans R2).